Reading from the N-terminus, the 98-residue chain is NADH-ubiquinone oxidoreductase chain 4L (98 aa).

The next 3 membrane-spanning stretches (helical) occupy residues 1–21 (MSMV…GLLM), 29–49 (SLLC…LTIL), and 61–81 (IILL…LVMV).

The protein belongs to the complex I subunit 4L family. In terms of assembly, core subunit of respiratory chain NADH dehydrogenase (Complex I) which is composed of 45 different subunits.

It localises to the mitochondrion inner membrane. It catalyses the reaction a ubiquinone + NADH + 5 H(+)(in) = a ubiquinol + NAD(+) + 4 H(+)(out). In terms of biological role, core subunit of the mitochondrial membrane respiratory chain NADH dehydrogenase (Complex I) which catalyzes electron transfer from NADH through the respiratory chain, using ubiquinone as an electron acceptor. Part of the enzyme membrane arm which is embedded in the lipid bilayer and involved in proton translocation. The polypeptide is NADH-ubiquinone oxidoreductase chain 4L (MT-ND4L) (Bos indicus (Zebu)).